The primary structure comprises 171 residues: Sec-independent protein translocase protein TatB (171 aa).

The chain crosses the membrane as a helical span at residues 1–21 (MFDIGFSELLLVFIIGLVVLG). The tract at residues 117–171 (KDNETAHEGVTPAAAQTQASSPEQKPETTPEPVVKPAADAEPKTAAPSPSSSDKP) is disordered. Residues 130–139 (AAQTQASSPE) are compositionally biased toward polar residues.

This sequence belongs to the TatB family. As to quaternary structure, the Tat system comprises two distinct complexes: a TatABC complex, containing multiple copies of TatA, TatB and TatC subunits, and a separate TatA complex, containing only TatA subunits. Substrates initially bind to the TatABC complex, which probably triggers association of the separate TatA complex to form the active translocon.

It localises to the cell inner membrane. Part of the twin-arginine translocation (Tat) system that transports large folded proteins containing a characteristic twin-arginine motif in their signal peptide across membranes. Together with TatC, TatB is part of a receptor directly interacting with Tat signal peptides. TatB may form an oligomeric binding site that transiently accommodates folded Tat precursor proteins before their translocation. The protein is Sec-independent protein translocase protein TatB of Escherichia coli O6:K15:H31 (strain 536 / UPEC).